We begin with the raw amino-acid sequence, 271 residues long: Large ribosomal subunit protein uL2 (271 aa).

Residues 221–271 are disordered; the sequence is RGVAMNPVDHPMGGGEGKSSGGHPRNRNGIPSNGFKTRNKKKITNKYIIKK. Positions 257–271 are enriched in basic residues; sequence TRNKKKITNKYIIKK.

This sequence belongs to the universal ribosomal protein uL2 family. As to quaternary structure, part of the 50S ribosomal subunit. Forms a bridge to the 30S subunit in the 70S ribosome.

Its function is as follows. One of the primary rRNA binding proteins. Required for association of the 30S and 50S subunits to form the 70S ribosome, for tRNA binding and peptide bond formation. It has been suggested to have peptidyltransferase activity; this is somewhat controversial. Makes several contacts with the 16S rRNA in the 70S ribosome. This Karelsulcia muelleri (strain GWSS) (Sulcia muelleri) protein is Large ribosomal subunit protein uL2.